The following is a 526-amino-acid chain: Bifunctional purine biosynthesis protein PurH (526 aa).

The region spanning 1-147 (MSVIKRALIS…KNWKHVAIVT (147 aa)) is the MGS-like domain.

The protein belongs to the PurH family.

The catalysed reaction is (6R)-10-formyltetrahydrofolate + 5-amino-1-(5-phospho-beta-D-ribosyl)imidazole-4-carboxamide = 5-formamido-1-(5-phospho-D-ribosyl)imidazole-4-carboxamide + (6S)-5,6,7,8-tetrahydrofolate. It carries out the reaction IMP + H2O = 5-formamido-1-(5-phospho-D-ribosyl)imidazole-4-carboxamide. Its pathway is purine metabolism; IMP biosynthesis via de novo pathway; 5-formamido-1-(5-phospho-D-ribosyl)imidazole-4-carboxamide from 5-amino-1-(5-phospho-D-ribosyl)imidazole-4-carboxamide (10-formyl THF route): step 1/1. It functions in the pathway purine metabolism; IMP biosynthesis via de novo pathway; IMP from 5-formamido-1-(5-phospho-D-ribosyl)imidazole-4-carboxamide: step 1/1. The chain is Bifunctional purine biosynthesis protein PurH from Neisseria gonorrhoeae (strain NCCP11945).